The sequence spans 510 residues: Histidine ammonia-lyase (510 aa).

The 5-imidazolinone (Ala-Gly) cross-link spans 143–145; it reads ASG. Position 144 is a 2,3-didehydroalanine (Ser) (S144).

This sequence belongs to the PAL/histidase family. Contains an active site 4-methylidene-imidazol-5-one (MIO), which is formed autocatalytically by cyclization and dehydration of residues Ala-Ser-Gly.

It localises to the cytoplasm. It carries out the reaction L-histidine = trans-urocanate + NH4(+). Its pathway is amino-acid degradation; L-histidine degradation into L-glutamate; N-formimidoyl-L-glutamate from L-histidine: step 1/3. This is Histidine ammonia-lyase from Pseudomonas putida (strain ATCC 47054 / DSM 6125 / CFBP 8728 / NCIMB 11950 / KT2440).